Consider the following 257-residue polypeptide: MFILSYHLANLIFFIIFMTSAKENILRHLAIIMDGNGRWAKSRLKPRIFGHRNSVSSVDATIEYCVENNIEMLTLFAFGRDNWLRPAQEVSDLMDLFYKTLKDKTPKLHDNNIVVTVVGDRSRLSNKLIGMIEYSESLTKSNTGLKLRLAVDYAGRWDIVEATRAIAREVDIGKLSVDEIDQNSFAKYLVGGNMPVDLLIRTSGEVRLSDFMLWQLAYAEMYFTDIMWPDFSKQELTRAVEYFYSRQRRFGKSGEQI.

The active site involves Asp34. Mg(2+) is bound at residue Asp34. Substrate contacts are provided by residues 35-38, Trp39, Arg47, and His51; that span reads GNGR. Catalysis depends on Asn82, which acts as the Proton acceptor. Residues Trp83, Arg85, Arg201, and 207 to 209 contribute to the substrate site; that span reads RLS. Glu220 lines the Mg(2+) pocket.

Belongs to the UPP synthase family. In terms of assembly, homodimer. It depends on Mg(2+) as a cofactor.

The enzyme catalyses 8 isopentenyl diphosphate + (2E,6E)-farnesyl diphosphate = di-trans,octa-cis-undecaprenyl diphosphate + 8 diphosphate. Catalyzes the sequential condensation of isopentenyl diphosphate (IPP) with (2E,6E)-farnesyl diphosphate (E,E-FPP) to yield (2Z,6Z,10Z,14Z,18Z,22Z,26Z,30Z,34E,38E)-undecaprenyl diphosphate (di-trans,octa-cis-UPP). UPP is the precursor of glycosyl carrier lipid in the biosynthesis of bacterial cell wall polysaccharide components such as peptidoglycan and lipopolysaccharide. The sequence is that of Ditrans,polycis-undecaprenyl-diphosphate synthase ((2E,6E)-farnesyl-diphosphate specific) from Francisella tularensis subsp. tularensis (strain SCHU S4 / Schu 4).